We begin with the raw amino-acid sequence, 216 residues long: Cytidylate kinase (216 aa).

11–19 lines the ATP pocket; it reads GPAGAGKGT.

Belongs to the cytidylate kinase family. Type 1 subfamily.

The protein localises to the cytoplasm. The enzyme catalyses CMP + ATP = CDP + ADP. The catalysed reaction is dCMP + ATP = dCDP + ADP. The polypeptide is Cytidylate kinase (Mesorhizobium japonicum (strain LMG 29417 / CECT 9101 / MAFF 303099) (Mesorhizobium loti (strain MAFF 303099))).